Reading from the N-terminus, the 368-residue chain is Putative alcohol dehydrogenase D (368 aa).

Zn(2+) is bound by residues cysteine 40, histidine 61, cysteine 91, cysteine 94, cysteine 97, cysteine 105, and cysteine 167.

It belongs to the zinc-containing alcohol dehydrogenase family. Zn(2+) is required as a cofactor.

It catalyses the reaction a primary alcohol + NAD(+) = an aldehyde + NADH + H(+). It carries out the reaction a secondary alcohol + NAD(+) = a ketone + NADH + H(+). Required for maintaining the appropriate mycolic acid composition and permeability of the envelope on its exposure to acidic pH. This chain is Putative alcohol dehydrogenase D (adhD), found in Mycobacterium tuberculosis (strain CDC 1551 / Oshkosh).